We begin with the raw amino-acid sequence, 1785 residues long: Mellein synthase (1785 aa).

Positions 1–36 (MATPDDPATPALSLSASNSSSPTAASSVPPPTGTSE) are disordered. The span at 8 to 27 (ATPALSLSASNSSSPTAASS) shows a compositional bias: low complexity. One can recognise a Ketosynthase family 3 (KS3) domain in the interval 39–464 (YDDVAIIGMS…GTVSHAIIEQ (426 aa)). Catalysis depends on for beta-ketoacyl synthase activity residues Cys211, His346, and His386. Positions 575–888 (VWVFSGHGSH…AVAQLWTKGV (314 aa)) are malonyl-CoA:ACP transacylase (MAT) domain. The active-site For malonyltransferase activity is the Ser661. An N-terminal hotdog fold region spans residues 933-1047 (NNMLGQRMVV…ASWENEPSAN (115 aa)). Residues 933 to 1206 (NNMLGQRMVV…FTEVEATPTK (274 aa)) enclose the PKS/mFAS DH domain. The dehydratase (DH) domain stretch occupies residues 935–1203 (MLGQRMVVAG…SIRFTEVEAT (269 aa)). His965 acts as the Proton acceptor; for dehydratase activity in catalysis. Residues 1062-1206 (GTRVSETFSV…FTEVEATPTK (145 aa)) are C-terminal hotdog fold. The active-site Proton donor; for dehydratase activity is the Asp1123. Residues 1418 to 1608 (GTYVLTGGLG…AIAFQWTAWR (191 aa)) are ketoreductase (KR) domain. A compositionally biased stretch (polar residues) spans 1681–1698 (QDQSAPASGNASDSSGRP). The interval 1681–1701 (QDQSAPASGNASDSSGRPTAS) is disordered. A Carrier domain is found at 1706–1781 (PWLDVKIREC…AMVGWFQKQF (76 aa)). An O-(pantetheine 4'-phosphoryl)serine modification is found at Ser1741.

The protein operates within secondary metabolite biosynthesis. Polyketide synthase that produces (R)-mellein, a secondary metabolite that inhibits the germination of wheat (Triticum aestivum) and barrel medic (Medicago truncatula) seeds. Condensates 1 acetate starter unit and 4 extender malonate units. The nascent pentaketide intermediate then undergoes an aldol cyclization and is aromatized via dehydration. The (R)-O-methylmellein isolated from P.nodorum is most likely to be derived from (R)-mellein via an additional methylation at the hydroxyl group. Interestingly, no O-methyltransferase gene is encoded in the vicinity of MLNS on the chromosome. Thus, the O-methylation is likely to be catalyzed by an endogenous O-methyltransferase encoded elsewhere in the genome of P.nodorum. This is Mellein synthase from Phaeosphaeria nodorum (strain SN15 / ATCC MYA-4574 / FGSC 10173) (Glume blotch fungus).